The primary structure comprises 184 residues: MVVIAVSGQPGSGKTTIAREIARVLGLPLVSSGLLFREMAARMGMDFIEFHKYAETNPDIDKKVDSLAIERAKAGDVVLEGHLTAWIVRPYADVCIYLKASLETRARRVALRDGKSLQDALREVAEREELNRRRYLSIYGIDINDLSIFDLVLDTSHLSVNDAVRISLDYTCTSLSFKYSRKIC.

8 to 16 (GQPGSGKTT) contributes to the ATP binding site.

The protein belongs to the cytidylate kinase family. Type 2 subfamily.

The protein resides in the cytoplasm. It carries out the reaction CMP + ATP = CDP + ADP. It catalyses the reaction dCMP + ATP = dCDP + ADP. In Pyrobaculum aerophilum (strain ATCC 51768 / DSM 7523 / JCM 9630 / CIP 104966 / NBRC 100827 / IM2), this protein is Cytidylate kinase.